Here is a 166-residue protein sequence, read N- to C-terminus: UPF0134 protein MPN_138 (166 aa).

Belongs to the UPF0134 family.

This Mycoplasma pneumoniae (strain ATCC 29342 / M129 / Subtype 1) (Mycoplasmoides pneumoniae) protein is UPF0134 protein MPN_138.